We begin with the raw amino-acid sequence, 503 residues long: Cytochrome P450 7A1 (503 aa).

The helical transmembrane segment at 4–24 (ISLIWGIAVVVSCCIWFIIGI) threads the bilayer. Cys-444 is a binding site for heme.

The protein belongs to the cytochrome P450 family. Requires heme as cofactor.

Its subcellular location is the endoplasmic reticulum membrane. It localises to the microsome membrane. It carries out the reaction cholesterol + reduced [NADPH--hemoprotein reductase] + O2 = 7alpha-hydroxycholesterol + oxidized [NADPH--hemoprotein reductase] + H2O + H(+). It catalyses the reaction 4beta-hydroxycholesterol + reduced [NADPH--hemoprotein reductase] + O2 = 4beta,7alpha-dihydroxycholesterol + oxidized [NADPH--hemoprotein reductase] + H2O + H(+). The enzyme catalyses lathosterol + reduced [NADPH--hemoprotein reductase] + O2 = 7alpha,8alpha-epoxy-5alpha-cholestan-3beta-ol + oxidized [NADPH--hemoprotein reductase] + H2O + H(+). The catalysed reaction is lathosterol + reduced [NADPH--hemoprotein reductase] + O2 = 5alpha-cholestan-7-oxo-3beta-ol + oxidized [NADPH--hemoprotein reductase] + H2O + H(+). It carries out the reaction 7-dehydrocholesterol + reduced [NADPH--hemoprotein reductase] + O2 = 7-oxocholesterol + oxidized [NADPH--hemoprotein reductase] + H2O + H(+). It catalyses the reaction (24S)-hydroxycholesterol + reduced [NADPH--hemoprotein reductase] + O2 = (24S)-7alpha-dihydroxycholesterol + oxidized [NADPH--hemoprotein reductase] + H2O + H(+). The enzyme catalyses (24R)-hydroxycholesterol + reduced [NADPH--hemoprotein reductase] + O2 = (24R)-7alpha-dihydroxycholesterol + oxidized [NADPH--hemoprotein reductase] + H2O + H(+). The protein operates within lipid metabolism; bile acid biosynthesis. It participates in steroid metabolism; cholesterol degradation. A cytochrome P450 monooxygenase involved in the metabolism of endogenous cholesterol and its oxygenated derivatives (oxysterols). Mechanistically, uses molecular oxygen inserting one oxygen atom into a substrate, and reducing the second into a water molecule, with two electrons provided by NADPH via cytochrome P450 reductase (CPR; NADPH-ferrihemoprotein reductase). Functions as a critical regulatory enzyme of bile acid biosynthesis and cholesterol homeostasis. Catalyzes the hydroxylation of carbon hydrogen bond at 7-alpha position of cholesterol, a rate-limiting step in cholesterol catabolism and bile acid biosynthesis. 7-alpha hydroxylates several oxysterols, including 4beta-hydroxycholesterol and 24-hydroxycholesterol. Catalyzes the oxidation of the 7,8 double bond of 7-dehydrocholesterol and lathosterol with direct and predominant formation of the 7-keto derivatives. This Mus musculus (Mouse) protein is Cytochrome P450 7A1.